Here is a 280-residue protein sequence, read N- to C-terminus: uncharacterized protein (280 aa).

This is an uncharacterized protein from Acanthamoeba polyphaga mimivirus (APMV).